Consider the following 492-residue polypeptide: Glutamyl-tRNA(Gln) amidotransferase subunit A, mitochondrial (492 aa).

Residues K78 and S159 each act as charge relay system in the active site. S183 acts as the Acyl-ester intermediate in catalysis.

The protein belongs to the amidase family. GatA subfamily. In terms of assembly, subunit of the heterotrimeric GatCAB amidotransferase (AdT) complex, composed of A, B and C subunits.

The protein localises to the mitochondrion. It catalyses the reaction L-glutamyl-tRNA(Gln) + L-glutamine + ATP + H2O = L-glutaminyl-tRNA(Gln) + L-glutamate + ADP + phosphate + H(+). Allows the formation of correctly charged Gln-tRNA(Gln) through the transamidation of misacylated Glu-tRNA(Gln) in the mitochondria. The reaction takes place in the presence of glutamine and ATP through an activated gamma-phospho-Glu-tRNA(Gln). This Anopheles gambiae (African malaria mosquito) protein is Glutamyl-tRNA(Gln) amidotransferase subunit A, mitochondrial.